A 105-amino-acid chain; its full sequence is Large ribosomal subunit protein uL24 (105 aa).

Belongs to the universal ribosomal protein uL24 family. In terms of assembly, part of the 50S ribosomal subunit.

Its function is as follows. One of two assembly initiator proteins, it binds directly to the 5'-end of the 23S rRNA, where it nucleates assembly of the 50S subunit. Functionally, one of the proteins that surrounds the polypeptide exit tunnel on the outside of the subunit. The chain is Large ribosomal subunit protein uL24 from Marinomonas sp. (strain MWYL1).